We begin with the raw amino-acid sequence, 526 residues long: Ribonuclease Y (526 aa).

A helical membrane pass occupies residues 10–30 (ITFILLIVVGALGGALVGYFI). A KH domain is found at 216 to 279 (TVTVVEIPNE…EVAKRALTIL (64 aa)). One can recognise an HD domain in the interval 342–435 (VLKHSIEVAF…VAAADALSAA (94 aa)).

The protein belongs to the RNase Y family.

Its subcellular location is the cell membrane. Its function is as follows. Endoribonuclease that initiates mRNA decay. The sequence is that of Ribonuclease Y from Acholeplasma laidlawii (strain PG-8A).